The chain runs to 412 residues: Motilin receptor (412 aa).

At 1–35 the chain is on the extracellular side; that stretch reads MGSPWNGSDGPEGAREPPWPALPPCDERRCSPFPL. The N-linked (GlcNAc...) asparagine glycan is linked to Asn6. Residues 36–56 traverse the membrane as a helical segment; sequence GALVPVTAVCLCLFVVGVSGN. Over 57 to 74 the chain is Cytoplasmic; it reads VVTVMLIGRYRDMRTTTN. Residues 75 to 94 traverse the membrane as a helical segment; it reads LYLGSMAVSDLLILLGLPFD. The Extracellular segment spans residues 95–112; the sequence is LYRLWRSRPWVFGPLLCR. Residues Cys111 and Cys235 are joined by a disulfide bond. The chain crosses the membrane as a helical span at residues 113 to 134; sequence LSLYVGEGCTYATLLHMTALSV. Topologically, residues 135–157 are cytoplasmic; sequence ERYLAICRPLRARVLVTRRRVRA. Residues 158–178 traverse the membrane as a helical segment; sequence LIAVLWAVALLSAGPFLFLVG. The Extracellular portion of the chain corresponds to 179–246; sequence VEQDPGISVV…PSPAQLGALR (68 aa). N-linked (GlcNAc...) asparagine glycosylation is present at Asn192. The helical transmembrane segment at 247-270 threads the bilayer; it reads VMLWVTTAYFFLPFLCLSILYGLI. The Cytoplasmic segment spans residues 271 to 298; that stretch reads GRELWSSRRPLRGPAASGRERGHRQTVR. Residues 299–320 traverse the membrane as a helical segment; it reads VLLVVVLAFIICWLPFHVGRII. Residues 321–334 are Extracellular-facing; it reads YINTEDSRMMYFSQ. The helical transmembrane segment at 335-358 threads the bilayer; the sequence is YFNIVALQLFYLSASINPILYNLI. The Cytoplasmic segment spans residues 359–412; it reads SKKYRAAAFKLLLARKSRPRGFHRSRDTAGEVAGDTGGDTVGYTETSANVKTMG.

Belongs to the G-protein coupled receptor 1 family. As to expression, expressed only in thyroid, stomach, and bone marrow.

The protein resides in the cell membrane. In terms of biological role, receptor for motilin. The chain is Motilin receptor (MLNR) from Homo sapiens (Human).